Here is a 375-residue protein sequence, read N- to C-terminus: Stimulator of interferon genes protein 2 (375 aa).

A run of 4 helical transmembrane segments spans residues 30 to 50, 60 to 80, 114 to 134, and 144 to 164; these read TATV…LLAV, IHFL…GELV, AGSI…VLYE, and YPIL…LVGL. The 2',3'-cGAMP site is built by Tyr195, Arg256, and Arg262.

This sequence belongs to the STING family.

Its subcellular location is the membrane. Functionally, facilitator of innate immune signaling that acts as a sensor of second messenger signals produced by cyclic GMP-AMP synthase-like receptors (cGLRs) and promotes the production of type I interferon. Innate immune response is triggered in response to nucleotides from viruses and bacteria delivered to the cytoplasm. Acts by binding cyclic dinucleotides: recognizes and binds 2'-3' linked cGAMP (2'-3'-cGAMP), a second messengers produced by cGLRs in response to nucleotides in the cytosol, such as double-stranded RNA (dsRNA). Upon binding to 2'-3'-cGAMP, oligomerizes and promotes the recruitment and subsequent activation of the transcription factor IRF3 to induce expression of type I interferon. The protein is Stimulator of interferon genes protein 2 of Stylophora pistillata (Smooth cauliflower coral).